Here is a 269-residue protein sequence, read N- to C-terminus: Formamidopyrimidine-DNA glycosylase (269 aa).

The Schiff-base intermediate with DNA role is filled by Pro-2. Glu-3 (proton donor) is an active-site residue. Lys-57 acts as the Proton donor; for beta-elimination activity in catalysis. Residues His-90, Arg-109, and Lys-150 each coordinate DNA. The FPG-type zinc finger occupies 235–269 (QVYGRKGEPCRVCGTPIVATKHAQRATFYCRQCQK). The Proton donor; for delta-elimination activity role is filled by Arg-259.

This sequence belongs to the FPG family. As to quaternary structure, monomer. It depends on Zn(2+) as a cofactor.

The catalysed reaction is Hydrolysis of DNA containing ring-opened 7-methylguanine residues, releasing 2,6-diamino-4-hydroxy-5-(N-methyl)formamidopyrimidine.. The enzyme catalyses 2'-deoxyribonucleotide-(2'-deoxyribose 5'-phosphate)-2'-deoxyribonucleotide-DNA = a 3'-end 2'-deoxyribonucleotide-(2,3-dehydro-2,3-deoxyribose 5'-phosphate)-DNA + a 5'-end 5'-phospho-2'-deoxyribonucleoside-DNA + H(+). Involved in base excision repair of DNA damaged by oxidation or by mutagenic agents. Acts as a DNA glycosylase that recognizes and removes damaged bases. Has a preference for oxidized purines, such as 7,8-dihydro-8-oxoguanine (8-oxoG). Has AP (apurinic/apyrimidinic) lyase activity and introduces nicks in the DNA strand. Cleaves the DNA backbone by beta-delta elimination to generate a single-strand break at the site of the removed base with both 3'- and 5'-phosphates. This Escherichia coli O6:H1 (strain CFT073 / ATCC 700928 / UPEC) protein is Formamidopyrimidine-DNA glycosylase.